Consider the following 120-residue polypeptide: Succinate dehydrogenase assembly factor 3, mitochondrial (120 aa).

The N-terminal 36 residues, 1 to 36 (MSRILMSQLTHPQRVRLLYKTILRLHRGLPAELRAL), are a transit peptide targeting the mitochondrion.

The protein belongs to the complex I LYR family. SDHAF3 subfamily. Interacts with SdhB within an SdhA-SdhB subcomplex.

It is found in the mitochondrion matrix. Functionally, plays an essential role in the assembly of succinate dehydrogenase (SDH), an enzyme complex (also referred to as respiratory complex II) that is a component of both the tricarboxylic acid (TCA) cycle and the mitochondrial electron transport chain, and which couples the oxidation of succinate to fumarate with the reduction of ubiquinone (coenzyme Q) to ubiquinol. Promotes maturation of the iron-sulfur protein subunit SdhB of the SDH catalytic dimer, protecting it from the deleterious effects of oxidants. In Drosophila melanogaster (Fruit fly), this protein is Succinate dehydrogenase assembly factor 3, mitochondrial.